We begin with the raw amino-acid sequence, 64 residues long: Cytochrome c oxidase subunit 5C-2 (64 aa).

A helical membrane pass occupies residues 15-34 (SVVKELIIGLTLGLAAGGLW).

Belongs to the cytochrome c oxidase subunit 5C family.

The protein resides in the mitochondrion inner membrane. In terms of biological role, this protein is one of the nuclear-coded polypeptide chains of cytochrome c oxidase, the terminal oxidase in mitochondrial electron transport. The protein is Cytochrome c oxidase subunit 5C-2 of Arabidopsis thaliana (Mouse-ear cress).